Here is a 316-residue protein sequence, read N- to C-terminus: Porphobilinogen deaminase (316 aa).

At Cys245 the chain carries S-(dipyrrolylmethanemethyl)cysteine.

It belongs to the HMBS family. In terms of assembly, monomer. Requires dipyrromethane as cofactor.

The enzyme catalyses 4 porphobilinogen + H2O = hydroxymethylbilane + 4 NH4(+). It functions in the pathway porphyrin-containing compound metabolism; protoporphyrin-IX biosynthesis; coproporphyrinogen-III from 5-aminolevulinate: step 2/4. The protein operates within porphyrin-containing compound metabolism; chlorophyll biosynthesis. Functionally, tetrapolymerization of the monopyrrole PBG into the hydroxymethylbilane pre-uroporphyrinogen in several discrete steps. This is Porphobilinogen deaminase from Prochlorococcus marinus (strain MIT 9515).